The primary structure comprises 406 residues: 3-oxoacyl-[acyl-carrier-protein] synthase 1 (406 aa).

The region spanning 1–403 (MRRTVITGFG…GTNATLIFKR (403 aa)) is the Ketosynthase family 3 (KS3) domain. Active-site for beta-ketoacyl synthase activity residues include Cys-162, His-297, and His-332.

It belongs to the thiolase-like superfamily. Beta-ketoacyl-ACP synthases family. As to quaternary structure, homodimer.

It localises to the cytoplasm. It catalyses the reaction a fatty acyl-[ACP] + malonyl-[ACP] + H(+) = a 3-oxoacyl-[ACP] + holo-[ACP] + CO2. The enzyme catalyses (3Z)-decenoyl-[ACP] + malonyl-[ACP] + H(+) = 3-oxo-(5Z)-dodecenoyl-[ACP] + holo-[ACP] + CO2. It participates in lipid metabolism; fatty acid biosynthesis. Its function is as follows. Involved in the type II fatty acid elongation cycle. Catalyzes the elongation of a wide range of acyl-ACP by the addition of two carbons from malonyl-ACP to an acyl acceptor. Can also use unsaturated fatty acids. Catalyzes a key reaction in unsaturated fatty acid (UFA) synthesis, the elongation of the cis-3-decenoyl-ACP produced by FabA. The sequence is that of 3-oxoacyl-[acyl-carrier-protein] synthase 1 (fabB) from Haemophilus influenzae (strain ATCC 51907 / DSM 11121 / KW20 / Rd).